Reading from the N-terminus, the 1615-residue chain is Low-density lipoprotein receptor-related protein 5 (1615 aa).

The signal sequence occupies residues 1-31 (MEAAPPGPPWPLLLLLLLLLALCGCPAPAAA). Residues 32-288 (SPLLLFANRR…YSPMDIQVLS (257 aa)) form a beta-propeller 1 region. The Extracellular segment spans residues 32–1384 (SPLLLFANRR…PPSDDSPAHS (1353 aa)). LDL-receptor class B repeat units follow at residues 75-119 (GAVY…DWVG), 120-162 (KKLY…DPAH), 163-206 (GYMY…DLEE), 207-247 (QKLY…TLSG), and 248-290 (DTLY…LSQE). The stretch at 78-81 (YWTD) is one YWTD 1 repeat. The N-linked (GlcNAc...) asparagine glycan is linked to asparagine 93. A YWTD 2 repeat occupies 123-126 (YWTD). N-linked (GlcNAc...) asparagine glycosylation occurs at asparagine 138. The YWTD 3 repeat unit spans residues 166–169 (YWTD). A YWTD 4 repeat occupies 251–254 (YWTD). Residues 295–337 (FHTRCEEDNGGCSHLCLLSPSEPFYTCACPTGVQLQDNGRTCK) enclose the EGF-like 1 domain. 3 disulfide bridges follow: cysteine 299–cysteine 310, cysteine 306–cysteine 321, and cysteine 323–cysteine 336. Residues 341-602 (EEVLLLARRT…AVNVAKVVGT (262 aa)) form a beta-propeller 2 region. LDL-receptor class B repeat units follow at residues 385-427 (GYVY…DWVA), 428-470 (RNLY…HPVM), 471-514 (GLMY…DLQE), 515-557 (GKLY…LGDF), and 558-600 (IYWT…AKVV). YWTD repeat units lie at residues 388-391 (YWTD) and 431-434 (YWTD). N-linked (GlcNAc...) asparagine glycosylation occurs at asparagine 446. One copy of the YWTD 7 repeat lies at 474 to 477 (YWTD). Residue asparagine 499 is glycosylated (N-linked (GlcNAc...) asparagine). One copy of the YWTD 8 repeat lies at 559–562 (YWTD). The 41-residue stretch at 601 to 641 (GTNPCADRNGGCSHLCFFTPHATRCGCPIGLELLSDMKTCI) folds into the EGF-like 2 domain. Intrachain disulfides connect cysteine 605–cysteine 616, cysteine 612–cysteine 625, and cysteine 627–cysteine 640. The tract at residues 644–903 (EAFLVFTSRA…VFHSSRQDGL (260 aa)) is beta-propeller 3. LDL-receptor class B repeat units lie at residues 687-729 (NHIY…DWMG), 730-772 (KNLY…DPTK), 773-815 (GYIY…DYAD), 816-855 (QRLYWTDLDTNMIESSNMLGQERVVIADDLPHPFGLTQYS), and 856-898 (DYIY…FHSS). Residues 690–693 (YWTD) form a YWTD 9 repeat. N-linked (GlcNAc...) asparagine glycosylation occurs at asparagine 705. 2 YWTD repeats span residues 819 to 822 (YWTD) and 859 to 862 (YWTD). Asparagine 878 is a glycosylation site (N-linked (GlcNAc...) asparagine). Residues 902–942 (GLNDCMHNNGQCGQLCLAIPGGHRCGCASHYTLDPSSRNCS) enclose the EGF-like 3 domain. Intrachain disulfides connect cysteine 906/cysteine 917, cysteine 913/cysteine 926, and cysteine 928/cysteine 941. A beta-propeller 4 region spans residues 945–1212 (TTFLLFSQKS…AVEEVSLEEF (268 aa)). LDL-receptor class B repeat units lie at residues 989-1035 (KFIY…DIYS), 1036-1078 (RTLF…NAER), 1079-1123 (GYLY…DNTL), 1124-1164 (GKLF…TILG), and 1165-1207 (KHLY…VEEV). One can recognise an EGF-like 4 domain in the interval 1213-1254 (SAHPCARDNGGCSHICIAKGDGTPRCSCPVHLVLLQNLLTCG). Intrachain disulfides connect cysteine 1217–cysteine 1228, cysteine 1224–cysteine 1238, cysteine 1240–cysteine 1253, cysteine 1259–cysteine 1273, cysteine 1266–cysteine 1286, cysteine 1280–cysteine 1295, cysteine 1298–cysteine 1310, cysteine 1305–cysteine 1323, cysteine 1317–cysteine 1332, cysteine 1336–cysteine 1348, cysteine 1343–cysteine 1361, and cysteine 1355–cysteine 1370. LDL-receptor class A domains lie at 1258–1296 (TCSPDQFACATGEIDCIPGAWRCDGFPECDDQSDEEGCP), 1297–1333 (VCSAAQFPCARGQCVDLRLRCDGEADCQDRSDEADCD), and 1335–1371 (ICLPNQFRCASGQCVLIKQQCDSFPDCIDGSDELMCE). The chain crosses the membrane as a helical span at residues 1385–1407 (SAIGPVIGIILSLFVMGGVYFVC). At 1408–1615 (QRVVCQRYAG…PPPSPCTDSS (208 aa)) the chain is on the cytoplasmic side. Residues 1475–1501 (RNHVTGASSSSSSSTKATLYPPILNPP) are disordered. The short motif at 1500–1506 (PPPSPAT) is the PPPSP motif A element. The PPPSP motif B motif lies at 1538–1545 (PPTTPCST). Residues 1568 to 1615 (SDSDPYPPPPTPHSQYLSAEDSCPPSPATERSYFHLFPPPPSPCTDSS) form a disordered region. The PPPSP motif C signature appears at 1574–1581 (PPPPTPHS). A PPPSP motif D motif is present at residues 1591-1596 (PPSPAT). Pro residues predominate over residues 1604-1615 (FPPPPSPCTDSS). The short motif at 1605–1612 (PPPPSPCT) is the PPPSP motif E element.

Belongs to the LDLR family. Homodimer; disulfide-linked. Forms phosphorylated oligomer aggregates on Wnt-signaling. Component of a Wnt-signaling complex that contains a WNT protein, a FZD protein and LRP5 or LRP6. Interacts with FZD8; the interaction is formed on WNT-binding and signaling. Interacts (via the phosphorylated PPPSP motif domains) with AXIN1; the interaction prevents inhibition of beta-catenin phosphorylation and signaling and is enhanced in the presence of GSK3B and WNT1 or WNT3A. Interacts (via beta-propeller regions 3 and 4) with DKK1; the interaction, enhanced by MESD and/or KREMEN, inhibits beta-catenin signaling by preventing GSK3-mediated phosphorylation of the PPPSP motifs and subsequent, AXIN1 binding. Interacts with MESD; the interaction prevents the formation of LRP5 aggregates, targets LRP5 to the plasma membrane and, when complexed with KREMEN2, increases DKK1 binding. Interacts with CSNK1E. Interacts with SOST; the interaction antagonizes canonical Wnt signaling. Interacts with APCDD1. Interacts with CAPRIN2. Post-translationally, phosphorylation of cytoplasmic PPPSP motifs regulates the signal transduction of the Wnt signaling pathway through acting as a docking site for AXIN1. As to expression, widely expressed, with the highest level of expression in the liver and in aorta.

It localises to the membrane. The protein localises to the endoplasmic reticulum. Functionally, acts as a coreceptor with members of the frizzled family of seven-transmembrane spanning receptors to transduce signal by Wnt proteins. Activates the canonical Wnt signaling pathway that controls cell fate determination and self-renewal during embryonic development and adult tissue regeneration. In particular, may play an important role in the development of the posterior patterning of the epiblast during gastrulation. During bone development, regulates osteoblast proliferation and differentiation thus determining bone mass. Mechanistically, the formation of the signaling complex between Wnt ligand, frizzled receptor and LRP5 coreceptor promotes the recruitment of AXIN1 to LRP5, stabilizing beta-catenin/CTNNB1 and activating TCF/LEF-mediated transcriptional programs. Acts as a coreceptor for non-Wnt proteins, such as norrin/NDP. Binding of norrin/NDP to frizzled 4/FZD4-LRP5 receptor complex triggers beta-catenin/CTNNB1-dependent signaling known to be required for retinal vascular development. Plays a role in controlling postnatal vascular regression in retina via macrophage-induced endothelial cell apoptosis. The chain is Low-density lipoprotein receptor-related protein 5 from Homo sapiens (Human).